We begin with the raw amino-acid sequence, 107 residues long: Phosphoribosyl-ATP pyrophosphatase (107 aa).

This sequence belongs to the PRA-PH family.

It localises to the cytoplasm. It carries out the reaction 1-(5-phospho-beta-D-ribosyl)-ATP + H2O = 1-(5-phospho-beta-D-ribosyl)-5'-AMP + diphosphate + H(+). The protein operates within amino-acid biosynthesis; L-histidine biosynthesis; L-histidine from 5-phospho-alpha-D-ribose 1-diphosphate: step 2/9. This chain is Phosphoribosyl-ATP pyrophosphatase, found in Methylobacterium radiotolerans (strain ATCC 27329 / DSM 1819 / JCM 2831 / NBRC 15690 / NCIMB 10815 / 0-1).